Here is a 183-residue protein sequence, read N- to C-terminus: Dual-action ribosomal maturation protein DarP (183 aa).

The protein belongs to the DarP family.

It is found in the cytoplasm. Functionally, member of a network of 50S ribosomal subunit biogenesis factors which assembles along the 30S-50S interface, preventing incorrect 23S rRNA structures from forming. Promotes peptidyl transferase center (PTC) maturation. The protein is Dual-action ribosomal maturation protein DarP of Salmonella enteritidis PT4 (strain P125109).